The primary structure comprises 132 residues: Chaperone protein SycT (132 aa).

In terms of assembly, binds to YopT.

Functions as a specific chaperone for YopT. The polypeptide is Chaperone protein SycT (sycT) (Yersinia pestis).